The primary structure comprises 298 residues: tRNA pseudouridine synthase A (298 aa).

Asp-56 serves as the catalytic Nucleophile. Residue Tyr-125 coordinates substrate.

It belongs to the tRNA pseudouridine synthase TruA family. Homodimer.

The catalysed reaction is uridine(38/39/40) in tRNA = pseudouridine(38/39/40) in tRNA. Its function is as follows. Formation of pseudouridine at positions 38, 39 and 40 in the anticodon stem and loop of transfer RNAs. The protein is tRNA pseudouridine synthase A of Bifidobacterium animalis subsp. lactis (strain AD011).